The sequence spans 454 residues: tRNA modification GTPase MnmE (454 aa).

Positions 23, 80, and 120 each coordinate (6S)-5-formyl-5,6,7,8-tetrahydrofolate. Residues G216–G377 form the TrmE-type G domain. N226 serves as a coordination point for K(+). GTP contacts are provided by residues N226–S231, T245–T251, D270–G273, N335–D338, and S358–R360. S230 lines the Mg(2+) pocket. K(+) is bound by residues T245, I247, and T250. T251 provides a ligand contact to Mg(2+). K454 contributes to the (6S)-5-formyl-5,6,7,8-tetrahydrofolate binding site.

The protein belongs to the TRAFAC class TrmE-Era-EngA-EngB-Septin-like GTPase superfamily. TrmE GTPase family. As to quaternary structure, homodimer. Heterotetramer of two MnmE and two MnmG subunits. Requires K(+) as cofactor.

It is found in the cytoplasm. In terms of biological role, exhibits a very high intrinsic GTPase hydrolysis rate. Involved in the addition of a carboxymethylaminomethyl (cmnm) group at the wobble position (U34) of certain tRNAs, forming tRNA-cmnm(5)s(2)U34. The protein is tRNA modification GTPase MnmE of Salmonella paratyphi A (strain ATCC 9150 / SARB42).